A 514-amino-acid chain; its full sequence is tRNA-2-methylthio-N(6)-dimethylallyladenosine synthase (514 aa).

The 119-residue stretch at 68–186 folds into the MTTase N-terminal domain; it reads RTFLIKTYGC…LPEILEEAYL (119 aa). The [4Fe-4S] cluster site is built by C77, C113, C147, C223, C227, and C230. Positions 209–439 constitute a Radical SAM core domain; sequence REGSTKAWVN…NKKVGHYSEK (231 aa). The TRAM domain occupies 442 to 505; that stretch reads NQYEGKTVTV…QYSLNGTFKE (64 aa).

It belongs to the methylthiotransferase family. MiaB subfamily. As to quaternary structure, monomer. [4Fe-4S] cluster serves as cofactor.

The protein resides in the cytoplasm. The enzyme catalyses N(6)-dimethylallyladenosine(37) in tRNA + (sulfur carrier)-SH + AH2 + 2 S-adenosyl-L-methionine = 2-methylsulfanyl-N(6)-dimethylallyladenosine(37) in tRNA + (sulfur carrier)-H + 5'-deoxyadenosine + L-methionine + A + S-adenosyl-L-homocysteine + 2 H(+). In terms of biological role, catalyzes the methylthiolation of N6-(dimethylallyl)adenosine (i(6)A), leading to the formation of 2-methylthio-N6-(dimethylallyl)adenosine (ms(2)i(6)A) at position 37 in tRNAs that read codons beginning with uridine. The protein is tRNA-2-methylthio-N(6)-dimethylallyladenosine synthase of Staphylococcus haemolyticus (strain JCSC1435).